A 173-amino-acid polypeptide reads, in one-letter code: Alpha-crystallin A chain (173 aa).

Methionine 1 carries the post-translational modification N-acetylmethionine. Residues 1–63 (MDIAIQHPWF…RTVLDSGISE (63 aa)) are required for complex formation with BFSP1 and BFSP2. Position 6 is a deamidated glutamine; partial (glutamine 6). Serine 45 bears the Phosphoserine mark. At glutamine 50 the chain carries Deamidated glutamine; partial. Positions 52–162 (LFRTVLDSGI…GHSERAIPVS (111 aa)) constitute a sHSP domain. At lysine 70 the chain carries N6-acetyllysine. Glutamine 90 is modified (deamidated glutamine; partial). An N6-acetyllysine modification is found at lysine 99. Position 100 (histidine 100) interacts with Zn(2+). Deamidated asparagine; partial is present on asparagine 101. Zn(2+) contacts are provided by glutamate 102 and histidine 107. Serine 122 is subject to Phosphoserine. Asparagine 123 carries the post-translational modification Deamidated asparagine; partial. Positions 144–173 (PKIPSGMDAGHSERAIPVSREEKPGSAPSS) are disordered. A compositionally biased stretch (basic and acidic residues) spans 153–167 (GHSERAIPVSREEKP). Residue histidine 154 coordinates Zn(2+). Serine 162 carries O-linked (GlcNAc) serine glycosylation.

Belongs to the small heat shock protein (HSP20) family. As to quaternary structure, heteromer composed of three CRYAA and one CRYAB subunits. Inter-subunit bridging via zinc ions enhances stability, which is crucial as there is no protein turn over in the lens. Can also form homodimers and homotetramers (dimers of dimers) which serve as the building blocks of homooligomers. Within homooligomers, the zinc-binding motif is created from residues of 3 different molecules. His-100 and Glu-102 from one molecule are ligands of the zinc ion, and His-107 and His-154 residues from additional molecules complete the site with tetrahedral coordination geometry. Part of a complex required for lens intermediate filament formation composed of BFSP1, BFSP2 and CRYAA. Post-translationally, acetylation at Lys-70 may increase chaperone activity. In terms of processing, undergoes age-dependent proteolytical cleavage at the C-terminus.

Its subcellular location is the cytoplasm. The protein localises to the nucleus. Functionally, contributes to the transparency and refractive index of the lens. Acts as a chaperone, preventing aggregation of various proteins under a wide range of stress conditions. Required for the correct formation of lens intermediate filaments as part of a complex composed of BFSP1, BFSP2 and CRYAA. The protein is Alpha-crystallin A chain (CRYAA) of Equus caballus (Horse).